We begin with the raw amino-acid sequence, 716 residues long: Leucine-rich repeat neuronal protein 1 (716 aa).

The N-terminal stretch at 1 to 25 (MARMSFVIAACQLVLGLLMTSLTES) is a signal peptide. The LRRNT domain maps to 26–72 (SIQNSECPQLCVCEIRPWFTPQSTYREATTVDCNDLRLTRIPSNLSS). Over 26 to 631 (SIQNSECPQL…DISDQETSTA (606 aa)) the chain is Extracellular. LRR repeat units lie at residues 73 to 95 (DTQV…QQLF), 96 to 117 (NLTE…GLAN), 120 to 141 (QLTT…CLQD), 144 to 165 (NLQE…AFAG), 168 to 189 (NLLR…WFDS), 192 to 213 (NLEI…NFKP), 216 to 237 (NLRS…ALVG), 240 to 261 (SLES…ALQK), 264 to 285 (NLKF…DFKN), 313 to 335 (ELTK…AFRS), and 338 to 359 (ALES…TVES). 2 N-linked (GlcNAc...) asparagine glycosylation sites follow: N96 and N117. Residues 371–424 (NPLRCDCVIHWINSNKTNIRFMEPLSMFCAMPPEYKGHQVKEVLIQDSSEQCLP) form the LRRCT domain. N-linked (GlcNAc...) asparagine glycosylation occurs at N385. The 92-residue stretch at 424–515 (PMISHDSFPN…GADTRVATIK (92 aa)) folds into the Ig-like C2-type domain. The cysteines at positions 447 and 499 are disulfide-linked. N-linked (GlcNAc...) asparagine glycosylation occurs at N517. Residues 525 to 617 (QVLKIYVKQT…SCVNVTTKNA (93 aa)) form the Fibronectin type-III domain. The helical transmembrane segment at 632–652 (LAAVMGSMFAVISLASIAVYF) threads the bilayer. The Cytoplasmic segment spans residues 653–716 (AKRFKRKNYH…VDTSRSYYMW (64 aa)). Residues 691 to 700 (DSEKDKDGSA) are compositionally biased toward basic and acidic residues. A disordered region spans residues 691 to 716 (DSEKDKDGSADTKPTQVDTSRSYYMW). Over residues 702 to 716 (TKPTQVDTSRSYYMW) the composition is skewed to polar residues.

Its subcellular location is the membrane. This Homo sapiens (Human) protein is Leucine-rich repeat neuronal protein 1 (LRRN1).